The chain runs to 636 residues: Interleukin-27 receptor subunit alpha (636 aa).

An N-terminal signal peptide occupies residues 1 to 32 (MRGGRGAPFWLWPLPKLALLPLLWVLFQRTRP). At 33 to 516 (QGSAGPLQCY…HLPDNTLRWK (484 aa)) the chain is on the extracellular side. Asparagine 51 and asparagine 76 each carry an N-linked (GlcNAc...) asparagine glycan. A Fibronectin type-III 1 domain is found at 131–231 (PRLGPDVDFS…PILSFQTPPS (101 aa)). The WSXWS motif signature appears at 217–221 (WGEWS). Residues asparagine 302, asparagine 311, asparagine 374, asparagine 382, and asparagine 467 are each glycosylated (N-linked (GlcNAc...) asparagine). Fibronectin type-III domains follow at residues 322–417 (APRS…LAPL) and 419–511 (GPTL…LPDN). A helical membrane pass occupies residues 517–537 (VLPGILFLWGLFLLGCGLSLA). The Cytoplasmic segment spans residues 538 to 636 (TSGRCYHLRH…LGPPRPQVLA (99 aa)). The Box 1 motif motif lies at 554 to 562 (VWEKVPDPA). Residues 587–636 (EVEEMEPPPVMESSQPAQATAPLDSGYEKHFLPTPEELGLLGPPRPQVLA) form a disordered region. Residues 618-628 (LPTPEELGLLG) are compositionally biased toward low complexity.

It belongs to the type I cytokine receptor family. Type 2 subfamily. In terms of assembly, component of a receptor complex composed of IL6ST/GP130, IL27RA/WSX1 and CNTFR which interacts with the neuroprotective peptide humanin. Highly expressed in lymphoid tissues such as spleen, lymph nodes and peripheral blood leukocytes. Weakly expressed in other tissues examined including heart, brain, fetal and adult lung, liver, skeletal muscle, kidney, pancreas, prostate, testis, ovary, small intestine, kidney and colon. In the lymphoid system, higher level expression in CD4+ T-cell subsets than in CD8+ T-cell subsets. Also weaker expression in CD19+ B-cells and monocytes.

It localises to the membrane. Receptor for IL27. Requires IL6ST/GP130 to mediate signal transduction in response to IL27. This signaling system acts through STAT3 and STAT1. Acts as a receptor for the neuroprotective peptide humanin as part of a complex with IL6ST/GP130 and CNTFR. Involved in the regulation of Th1-type immune responses. Also appears to be involved in innate defense mechanisms. This chain is Interleukin-27 receptor subunit alpha (IL27RA), found in Homo sapiens (Human).